We begin with the raw amino-acid sequence, 216 residues long: ATP-dependent Clp protease proteolytic subunit 3 (216 aa).

Serine 120 functions as the Nucleophile in the catalytic mechanism. Histidine 145 is a catalytic residue.

Belongs to the peptidase S14 family. As to quaternary structure, fourteen ClpP subunits assemble into 2 heptameric rings which stack back to back to give a disk-like structure with a central cavity, resembling the structure of eukaryotic proteasomes.

It is found in the cytoplasm. The enzyme catalyses Hydrolysis of proteins to small peptides in the presence of ATP and magnesium. alpha-casein is the usual test substrate. In the absence of ATP, only oligopeptides shorter than five residues are hydrolyzed (such as succinyl-Leu-Tyr-|-NHMec, and Leu-Tyr-Leu-|-Tyr-Trp, in which cleavage of the -Tyr-|-Leu- and -Tyr-|-Trp bonds also occurs).. In terms of biological role, cleaves peptides in various proteins in a process that requires ATP hydrolysis. Has a chymotrypsin-like activity. Plays a major role in the degradation of misfolded proteins. The protein is ATP-dependent Clp protease proteolytic subunit 3 of Prochlorococcus marinus (strain SARG / CCMP1375 / SS120).